Consider the following 255-residue polypeptide: Pimeloyl-[acyl-carrier protein] methyl ester esterase (255 aa).

The AB hydrolase-1 domain occupies 16-242 (LVLLHGWGMN…SSHAPFITEP (227 aa)). Residues Trp22, 82–83 (SL), and 143–147 (FMALQ) each bind substrate. Residue Ser82 is the Nucleophile of the active site. Catalysis depends on residues Asp207 and His235. His235 provides a ligand contact to substrate.

It belongs to the AB hydrolase superfamily. Carboxylesterase BioH family. As to quaternary structure, monomer.

Its subcellular location is the cytoplasm. The enzyme catalyses 6-carboxyhexanoyl-[ACP] methyl ester + H2O = 6-carboxyhexanoyl-[ACP] + methanol + H(+). Its pathway is cofactor biosynthesis; biotin biosynthesis. In terms of biological role, the physiological role of BioH is to remove the methyl group introduced by BioC when the pimeloyl moiety is complete. It allows to synthesize pimeloyl-ACP via the fatty acid synthetic pathway through the hydrolysis of the ester bonds of pimeloyl-ACP esters. The protein is Pimeloyl-[acyl-carrier protein] methyl ester esterase of Vibrio vulnificus (strain CMCP6).